We begin with the raw amino-acid sequence, 284 residues long: Bifunctional protein FolD (284 aa).

NADP(+) contacts are provided by residues 166–168 and Ile-232; that span reads GAS.

The protein belongs to the tetrahydrofolate dehydrogenase/cyclohydrolase family. As to quaternary structure, homodimer.

The enzyme catalyses (6R)-5,10-methylene-5,6,7,8-tetrahydrofolate + NADP(+) = (6R)-5,10-methenyltetrahydrofolate + NADPH. The catalysed reaction is (6R)-5,10-methenyltetrahydrofolate + H2O = (6R)-10-formyltetrahydrofolate + H(+). It participates in one-carbon metabolism; tetrahydrofolate interconversion. Functionally, catalyzes the oxidation of 5,10-methylenetetrahydrofolate to 5,10-methenyltetrahydrofolate and then the hydrolysis of 5,10-methenyltetrahydrofolate to 10-formyltetrahydrofolate. This Pseudomonas fluorescens (strain Pf0-1) protein is Bifunctional protein FolD.